Reading from the N-terminus, the 318-residue chain is Protein FdhE homolog (318 aa).

The protein belongs to the FdhE family.

It localises to the cytoplasm. In terms of biological role, necessary for formate dehydrogenase activity. The sequence is that of Protein FdhE homolog from Pseudomonas putida (strain ATCC 47054 / DSM 6125 / CFBP 8728 / NCIMB 11950 / KT2440).